The following is a 325-amino-acid chain: GMP reductase (325 aa).

Catalysis depends on C173, which acts as the Thioimidate intermediate. 202–225 (IIADGGIHEHGDIAKSIRFGATMV) lines the NADP(+) pocket.

This sequence belongs to the IMPDH/GMPR family. GuaC type 2 subfamily.

It carries out the reaction IMP + NH4(+) + NADP(+) = GMP + NADPH + 2 H(+). Functionally, catalyzes the irreversible NADPH-dependent deamination of GMP to IMP. It functions in the conversion of nucleobase, nucleoside and nucleotide derivatives of G to A nucleotides, and in maintaining the intracellular balance of A and G nucleotides. The sequence is that of GMP reductase from Albidiferax ferrireducens (strain ATCC BAA-621 / DSM 15236 / T118) (Rhodoferax ferrireducens).